Consider the following 126-residue polypeptide: Fumarate reductase subunit C (126 aa).

Helical transmembrane passes span 30–50 (IFVA…GAGG), 64–84 (VVVV…VTWF), and 105–125 (VLAG…WMVL).

Belongs to the FrdC family. As to quaternary structure, part of an enzyme complex containing four subunits: a flavoprotein (FrdA), an iron-sulfur protein (FrdB), and two hydrophobic anchor proteins (FrdC and FrdD).

The protein localises to the cell membrane. Its function is as follows. Anchors the catalytic components of the fumarate reductase complex to the cell membrane, binds quinones. This Mycobacterium tuberculosis (strain ATCC 25177 / H37Ra) protein is Fumarate reductase subunit C.